A 122-amino-acid chain; its full sequence is Large ribosomal subunit protein uL18 (122 aa).

The segment covering 1–19 has biased composition (basic residues); that stretch reads MSKLSRKQQTQKRHKRLRR. A disordered region spans residues 1 to 27; sequence MSKLSRKQQTQKRHKRLRRNLSGTESR.

This sequence belongs to the universal ribosomal protein uL18 family. In terms of assembly, part of the 50S ribosomal subunit; part of the 5S rRNA/L5/L18/L25 subcomplex. Contacts the 5S and 23S rRNAs.

Functionally, this is one of the proteins that bind and probably mediate the attachment of the 5S RNA into the large ribosomal subunit, where it forms part of the central protuberance. This is Large ribosomal subunit protein uL18 from Prochlorococcus marinus (strain NATL1A).